The primary structure comprises 628 residues: MGSCARLLLLWGCTVVAAGLSGVAGVSSRCEKACNPRMGNLALGRKLWADTTCGQNATELYCFYSENTDLTCRQPKCDKCNAAHPHLAHLPSAMADSSFRFPRTWWQSAEDVHREKIQLDLEAEFYFTHLIMMFKSPRPAAMVLDRSQDFGKTWKPYKYFATNCSATFGLEDDVVKKGAICTSKYSSPFPCTGGEVIFKALSPPYDTENPYSAKVQEQLKITNLRVQLLKRQSCPCQRNDLNDEPQHFTHYAIYDFIVKGSCFCNGHADQCIPVHGFRPVKAPGTFHMVHGKCMCKHNTAGSHCQHCAPLYNDQPWEAADGKTGAPNECRTCKCNGHADTCHFDVNVWEASGNRSGGVCDDCQHNTEGQHCQRCKPGFYRDLRRPFSAPDACKPCSCHPVGSAVLPANSVTFCDPSNGDCPCKPGVAGRHCDRCMVGYWGFGDYGCRPCDCAGSCDPITGDCISSHTDIDWHHEFPDFRPVHNKSEAAWEWEDAQGFSALLHSGKCECKEQTLGNAKAFCGMKYSYVLKIKILSAHDKGTHVEVNVKIKKVLKSTKLKIFRGKRTLYPESWTDRGCTCPILNPGLEYLVAGHEDVRTGKLIVNMKSFVQHWKPSLGRKVMDILKRECK.

A signal peptide spans 1–18 (MGSCARLLLLWGCTVVAA). The Laminin N-terminal domain maps to 30–261 (CEKACNPRMG…AIYDFIVKGS (232 aa)). N-linked (GlcNAc...) asparagine glycosylation is found at Asn56 and Asn163. 12 cysteine pairs are disulfide-bonded: Cys262–Cys271, Cys264–Cys293, Cys295–Cys304, Cys307–Cys329, Cys332–Cys341, Cys334–Cys359, Cys362–Cys371, Cys374–Cys392, Cys395–Cys413, Cys397–Cys420, Cys422–Cys431, and Cys434–Cys446. Laminin EGF-like domains are found at residues 262–331 (CFCN…ECRT), 332–394 (CKCN…ACKP), and 395–448 (CSCH…GCRP). A glycan (N-linked (GlcNAc...) asparagine) is linked at Asn353. A glycan (N-linked (GlcNAc...) asparagine) is linked at Asn483. 2 disulfides stabilise this stretch: Cys506–Cys576 and Cys520–Cys627. An NTR domain is found at 506-627 (CECKEQTLGN…KVMDILKREC (122 aa)).

In terms of assembly, may form a homodimer.

The protein resides in the secreted. The protein localises to the extracellular space. Its subcellular location is the extracellular matrix. Its function is as follows. May play an important role in neural, kidney and vascular development. This is Netrin-4 (NTN4) from Pongo abelii (Sumatran orangutan).